The chain runs to 445 residues: POU domain, class 3, transcription factor 2 (445 aa).

4 disordered regions span residues 63 to 173, 203 to 269, 336 to 361, and 411 to 445; these read TALS…WRSA, LGAG…TPTS, EADSSSGSPTSIDKIASQGRKRKKRT, and EKRMTPPGGTLPGAEDVYGGSRDTPPHHGVQTPVQ. Residues 68–90 show a composition bias toward gly residues; that stretch reads GGSGGGGGGGGGGGGGGGGGGDG. The span at 125–151 shows a compositional bias: low complexity; sequence QQQHQQQQQQQQQQQQQQQQQQQQQQQ. A compositionally biased stretch (basic and acidic residues) spans 217–226; it reads LRDAHDEPHH. The span at 227-237 shows a compositional bias: basic residues; sequence ADHHPHPHSHP. A compositionally biased stretch (pro residues) spans 239–253; the sequence is QQPPPPPPPQGPPGH. The POU-specific domain occupies 264–338; that stretch reads EDTPTSDDLE…LLNKWLEEAD (75 aa). S343 is subject to Phosphoserine. The homeobox DNA-binding region spans 356-415; the sequence is KRKKRTSIEVSVKGALESHFLKCPKPSAQEITSLADSLQLEKEVVRVWFCNRRQKEKRMT.

The protein belongs to the POU transcription factor family. Class-3 subfamily. Interacts with PQBP1. Interaction with ISL1. In terms of tissue distribution, expressed specifically at high levels in the brain.

The protein resides in the nucleus. In terms of biological role, transcription factor that plays a key role in neuronal differentiation. Binds preferentially to the recognition sequence which consists of two distinct half-sites, ('GCAT') and ('TAAT'), separated by a non-conserved spacer region of 0, 2, or 3 nucleotides. Acts as a transcriptional activator when binding cooperatively with SOX4, SOX11, or SOX12 to gene promoters. The combination of three transcription factors, ASCL1, POU3F2/BRN2 and MYT1L, is sufficient to reprogram fibroblasts and other somatic cells into induced neuronal (iN) cells in vitro. Acts downstream of ASCL1, accessing chromatin that has been opened by ASCL1, and promotes transcription of neuronal genes. The protein is POU domain, class 3, transcription factor 2 (Pou3f2) of Rattus norvegicus (Rat).